The following is a 122-amino-acid chain: Large ribosomal subunit protein uL14 (122 aa).

The protein belongs to the universal ribosomal protein uL14 family. Part of the 50S ribosomal subunit. Forms a cluster with proteins L3 and L19. In the 70S ribosome, L14 and L19 interact and together make contacts with the 16S rRNA in bridges B5 and B8.

Functionally, binds to 23S rRNA. Forms part of two intersubunit bridges in the 70S ribosome. The polypeptide is Large ribosomal subunit protein uL14 (Chlorobium luteolum (strain DSM 273 / BCRC 81028 / 2530) (Pelodictyon luteolum)).